A 418-amino-acid polypeptide reads, in one-letter code: Serine--tRNA ligase (418 aa).

232–234 (TAE) provides a ligand contact to L-serine. ATP is bound by residues 263–265 (RRE) and V279. An L-serine-binding site is contributed by E286. Residue 350–353 (EISS) participates in ATP binding. S385 serves as a coordination point for L-serine.

It belongs to the class-II aminoacyl-tRNA synthetase family. Type-1 seryl-tRNA synthetase subfamily. Homodimer. The tRNA molecule binds across the dimer.

It is found in the cytoplasm. It catalyses the reaction tRNA(Ser) + L-serine + ATP = L-seryl-tRNA(Ser) + AMP + diphosphate + H(+). The catalysed reaction is tRNA(Sec) + L-serine + ATP = L-seryl-tRNA(Sec) + AMP + diphosphate + H(+). The protein operates within aminoacyl-tRNA biosynthesis; selenocysteinyl-tRNA(Sec) biosynthesis; L-seryl-tRNA(Sec) from L-serine and tRNA(Sec): step 1/1. Catalyzes the attachment of serine to tRNA(Ser). Is also able to aminoacylate tRNA(Sec) with serine, to form the misacylated tRNA L-seryl-tRNA(Sec), which will be further converted into selenocysteinyl-tRNA(Sec). This chain is Serine--tRNA ligase, found in Leptospira biflexa serovar Patoc (strain Patoc 1 / Ames).